The sequence spans 792 residues: Starch synthase 2, chloroplastic/amyloplastic (792 aa).

The transit peptide at 1–55 (MASVAESSFPLLCQIKTQRRINSSTLRHSRVSYHDLPSGSLSFRSRSFVLGHRCK) directs the protein to the chloroplast. A disordered region spans residues 105 to 295 (IKESTPDLDD…GKDEEKPPPL (191 aa)). A compositionally biased stretch (polar residues) spans 145–156 (GSVSPSTYGKSS). Over residues 179-192 (SSASVISSSPVTSP) the composition is skewed to low complexity. Residues 221–233 (SVMTSPEKTSDPV) are compositionally biased toward polar residues. The segment covering 266-275 (KTEKYVEKTP) has biased composition (basic and acidic residues). Lysine 315 is an ADP-alpha-D-glucose binding site.

The protein belongs to the glycosyltransferase 1 family. Bacterial/plant glycogen synthase subfamily. As to expression, expressed in roots, leaves and flowers.

It is found in the plastid. The protein resides in the chloroplast. It localises to the amyloplast. It catalyses the reaction [(1-&gt;4)-alpha-D-glucosyl](n) + ADP-alpha-D-glucose = [(1-&gt;4)-alpha-D-glucosyl](n+1) + ADP + H(+). Its pathway is glycan biosynthesis; starch biosynthesis. Its function is as follows. Involved in the synthesis of glycan chains within amylopectin in leaves. Is required to produce chains with a degree of polymerization of 12 to 25 (DP12-DP25). This chain is Starch synthase 2, chloroplastic/amyloplastic (SS2), found in Arabidopsis thaliana (Mouse-ear cress).